Reading from the N-terminus, the 155-residue chain is 6,7-dimethyl-8-ribityllumazine synthase (155 aa).

5-amino-6-(D-ribitylamino)uracil-binding positions include W24, 58 to 60 (AFE), and 82 to 84 (AVI). 87–88 (GT) lines the (2S)-2-hydroxy-3-oxobutyl phosphate pocket. Catalysis depends on H90, which acts as the Proton donor. Residue F115 participates in 5-amino-6-(D-ribitylamino)uracil binding. Residue R129 participates in (2S)-2-hydroxy-3-oxobutyl phosphate binding.

It belongs to the DMRL synthase family. As to quaternary structure, forms an icosahedral capsid composed of 60 subunits, arranged as a dodecamer of pentamers.

The catalysed reaction is (2S)-2-hydroxy-3-oxobutyl phosphate + 5-amino-6-(D-ribitylamino)uracil = 6,7-dimethyl-8-(1-D-ribityl)lumazine + phosphate + 2 H2O + H(+). Its pathway is cofactor biosynthesis; riboflavin biosynthesis; riboflavin from 2-hydroxy-3-oxobutyl phosphate and 5-amino-6-(D-ribitylamino)uracil: step 1/2. Functionally, catalyzes the formation of 6,7-dimethyl-8-ribityllumazine by condensation of 5-amino-6-(D-ribitylamino)uracil with 3,4-dihydroxy-2-butanone 4-phosphate. This is the penultimate step in the biosynthesis of riboflavin. The chain is 6,7-dimethyl-8-ribityllumazine synthase from Teredinibacter turnerae (strain ATCC 39867 / T7901).